A 306-amino-acid chain; its full sequence is Follistatin-related protein 1 (306 aa).

A signal peptide spans 1 to 18 (MWKRWLALSLVTIALVHG). The Follistatin-like domain maps to 28–51 (ICANVFCGAGRECAVTEKGEPTCL). Cystine bridges form between cysteine 29/cysteine 40, cysteine 34/cysteine 50, cysteine 52/cysteine 82, cysteine 56/cysteine 75, and cysteine 64/cysteine 96. The Kazal-like domain occupies 46-98 (GEPTCLCIEQCKPHKRPVCGSNGKTYLNHCELHRDACLTGSKIQVDYDGHCKE). Asparagine 142 carries N-linked (GlcNAc...) asparagine glycosylation. In terms of domain architecture, EF-hand 1 spans 142-176 (NYSEILDKYFKSFDNGDSHLDSSEFLKFVEQNETA). Serine 163 carries the post-translational modification Phosphoserine. N-linked (GlcNAc...) asparagine glycans are attached at residues asparagine 173 and asparagine 178. Residues 191 to 226 (LRSLCVDALIELSDENADWKLSFQEFLKCLNPSFNP) form the EF-hand 2 domain. Positions 231–285 (CALEDETYADGAETEVDCNRCVCSCGHWVCTAMTCDGKNQKGVQTHTEEEKTGYV) constitute a VWFC domain.

Homodimer. Interacts with SCN10A. Interacts with DIP2A; DIP2A may act as a cell surface receptor for FSTL1. Interacts with BMP4. Interacts with CD14; this interaction promotes TL4-mediated signaling cascade. In terms of tissue distribution, during central nervous system development, strongly expressed in the telencephalon, diencephalon, brainstem, limbic system and spinal cord. Widely expressed in all organs.

The protein localises to the secreted. Secreted glycoprotein that is involved in various physiological processes, such as angiogenesis, regulation of the immune response, cell proliferation and differentiation. Plays a role in the development of the central nervous system, skeletal system, lungs, and ureter. Promotes endothelial cell survival, migration and differentiation into network structures in an AKT-dependent manner. Also promotes survival of cardiac myocytes. Initiates various signaling cascades by activating different receptors on the cell surface such as DIP2A, TLR4 or BMP receptors. This Mus musculus (Mouse) protein is Follistatin-related protein 1 (Fstl1).